The following is a 36-amino-acid chain: ADNRRPIWVMLLSSYWQDGNSLGVDAIMTNYPEDVK.

This sequence belongs to the arthropod phospholipase D family. Class II subfamily. The cofactor is Mg(2+). Post-translationally, contains 2 disulfide bonds. In terms of tissue distribution, expressed by the venom gland.

The protein resides in the secreted. The catalysed reaction is an N-(acyl)-sphingosylphosphocholine = an N-(acyl)-sphingosyl-1,3-cyclic phosphate + choline. It catalyses the reaction an N-(acyl)-sphingosylphosphoethanolamine = an N-(acyl)-sphingosyl-1,3-cyclic phosphate + ethanolamine. It carries out the reaction a 1-acyl-sn-glycero-3-phosphocholine = a 1-acyl-sn-glycero-2,3-cyclic phosphate + choline. The enzyme catalyses a 1-acyl-sn-glycero-3-phosphoethanolamine = a 1-acyl-sn-glycero-2,3-cyclic phosphate + ethanolamine. Its function is as follows. Dermonecrotic toxins cleave the phosphodiester linkage between the phosphate and headgroup of certain phospholipids (sphingolipid and lysolipid substrates), forming an alcohol (often choline) and a cyclic phosphate. This toxin acts on sphingomyelin (SM). It may also act on ceramide phosphoethanolamine (CPE), lysophosphatidylcholine (LPC) and lysophosphatidylethanolamine (LPE), but not on lysophosphatidylserine (LPS), and lysophosphatidylglycerol (LPG). It acts by transphosphatidylation, releasing exclusively cyclic phosphate products as second products. Induces dermonecrosis, hemolysis, increased vascular permeability, edema, inflammatory response, and platelet aggregation. The chain is Dermonecrotic toxin LgSicTox-beta-LOXN1/LOXN7 from Loxosceles gaucho (Spider).